The sequence spans 354 residues: Cysteine and histidine-rich domain-containing protein morgana (354 aa).

16 residues coordinate Zn(2+): C4, C9, C23, H26, C41, C42, C58, H63, C140, C145, C159, H162, C177, C178, C194, and H199. CHORD domains follow at residues 4 to 63 (CYNR…LAKH) and 140 to 199 (CKNN…YGEH). One can recognise a CS domain in the interval 210-301 (VVQCRYDWHQ…LEPGSWSNLN (92 aa)). Phosphoserine occurs at positions 324 and 339.

As to quaternary structure, interacts with Hsp83.

It is found in the cytoplasm. Its subcellular location is the nucleus. It localises to the cytoskeleton. The protein resides in the spindle. In terms of biological role, regulates centrosome duplication and mitotic spindle dynamics. Also involved in controlling the size of dendritic arbors. May act as co-chaperone for Hsp83. During mitotic spindle assembly, regulates microtubule (MT) dynamics by binding to MTs and promoting MT polymerisation. Promotes the elongation and retraction of terminal branches in response to changes in body size, possibly acting downstream of the TORC2 pathway to enable proportional scaling of dendritic arbors. The chain is Cysteine and histidine-rich domain-containing protein morgana from Drosophila melanogaster (Fruit fly).